The primary structure comprises 214 residues: Orotate phosphoribosyltransferase (214 aa).

A 5-phospho-alpha-D-ribose 1-diphosphate-binding site is contributed by K26. 34–35 (FF) provides a ligand contact to orotate. 5-phospho-alpha-D-ribose 1-diphosphate is bound by residues 72–73 (YK), R99, K100, K103, H105, and 124–132 (DDVITAGTA). Residues T128 and R156 each coordinate orotate.

This sequence belongs to the purine/pyrimidine phosphoribosyltransferase family. PyrE subfamily. As to quaternary structure, homodimer. Mg(2+) serves as cofactor.

It catalyses the reaction orotidine 5'-phosphate + diphosphate = orotate + 5-phospho-alpha-D-ribose 1-diphosphate. It functions in the pathway pyrimidine metabolism; UMP biosynthesis via de novo pathway; UMP from orotate: step 1/2. Catalyzes the transfer of a ribosyl phosphate group from 5-phosphoribose 1-diphosphate to orotate, leading to the formation of orotidine monophosphate (OMP). The chain is Orotate phosphoribosyltransferase from Actinobacillus succinogenes (strain ATCC 55618 / DSM 22257 / CCUG 43843 / 130Z).